The sequence spans 907 residues: DNA (cytosine-5)-methyltransferase CMT3 (907 aa).

Positions 1-15 (MAPSSPSSAAAPTRT) are enriched in low complexity. The segment at 1–154 (MAPSSPSSAA…RNAATRRPDE (154 aa)) is disordered. Positions 30–63 (ATDEPSTKRTRRPKAETKPRKKKDEVKEEEKPPM) are enriched in basic and acidic residues. A compositionally biased stretch (acidic residues) spans 64-89 (EDDACGEEPDAEEMALGEEAEAEEAE). Basic and acidic residues-rich tracts occupy residues 115–124 (HGSDGDHDPE) and 131–140 (PAKEARDKWP). The BAH domain maps to 172 to 297 (TLYCLHDDVY…VAYSTFANIP (126 aa)). The disordered stretch occupies residues 303-323 (SGSDTASDISSDDVDSSKGKV). Positions 335–868 (ATLLDLYSGC…YSLGLAYQRE (534 aa)) constitute an SAM-dependent MTase C5-type domain. The 64-residue stretch at 437 to 500 (FVVEKLAGIC…EGYRRKILPL (64 aa)) folds into the Chromo domain. Residue C513 is part of the active site.

This sequence belongs to the class I-like SAM-binding methyltransferase superfamily. C5-methyltransferase family.

The protein localises to the nucleus. The catalysed reaction is a 2'-deoxycytidine in DNA + S-adenosyl-L-methionine = a 5-methyl-2'-deoxycytidine in DNA + S-adenosyl-L-homocysteine + H(+). Involved in CpXpG DNA methylation. Plays a critical role in the maintenance of CpXpG DNA methylation and suppression of a wide spectrum of transposable element (TE) activities. Required for proper plant development in reproductive stage. The protein is DNA (cytosine-5)-methyltransferase CMT3 of Oryza sativa subsp. japonica (Rice).